A 353-amino-acid chain; its full sequence is Protein RecA (353 aa).

67 to 74 (GPESSGKT) contributes to the ATP binding site. The interval 330–353 (SNPNSTPDFSVDDSEGVAETNEDF) is disordered. Residues 339–353 (SVDDSEGVAETNEDF) are compositionally biased toward acidic residues.

Belongs to the RecA family.

Its subcellular location is the cytoplasm. In terms of biological role, can catalyze the hydrolysis of ATP in the presence of single-stranded DNA, the ATP-dependent uptake of single-stranded DNA by duplex DNA, and the ATP-dependent hybridization of homologous single-stranded DNAs. It interacts with LexA causing its activation and leading to its autocatalytic cleavage. The sequence is that of Protein RecA from Shigella sonnei.